The primary structure comprises 535 residues: Probable fucosyltransferase 4 (535 aa).

Over 1–20 (MYHIFQISGEVIKGLGLKTK) the chain is Cytoplasmic. The helical; Signal-anchor for type II membrane protein transmembrane segment at 21-41 (ILITIVFSTLLILSVMLLSFS) threads the bilayer. Residues 42-535 (NNFNNKLFAA…IWGLKLFDEL (494 aa)) lie on the Lumenal side of the membrane. 5 N-linked (GlcNAc...) asparagine glycosylation sites follow: N136, N226, N230, N377, and N409.

This sequence belongs to the glycosyltransferase 37 family. In terms of tissue distribution, expressed in roots, stems, leaves, flowers, siliques and seedlings.

The protein localises to the golgi apparatus. Its subcellular location is the golgi stack membrane. Its pathway is protein modification; protein glycosylation. May be involved in cell wall biosynthesis. May act as a fucosyltransferase. In Arabidopsis thaliana (Mouse-ear cress), this protein is Probable fucosyltransferase 4 (FUT4).